A 431-amino-acid chain; its full sequence is Probable glucarate dehydratase (431 aa).

Residues histidine 29, threonine 108, tyrosine 153, and lysine 198 each coordinate substrate. Lysine 200 acts as the Proton acceptor in catalysis. Aspartate 228 and asparagine 276 together coordinate Mg(2+). Substrate is bound by residues 228-230 (DPN), asparagine 276, 327-329 (HSN), histidine 356, and arginine 410. Histidine 327 functions as the Proton acceptor in the catalytic mechanism.

This sequence belongs to the mandelate racemase/muconate lactonizing enzyme family. GlucD subfamily. It depends on Mg(2+) as a cofactor.

The enzyme catalyses D-glucarate = 5-dehydro-4-deoxy-D-glucarate + H2O. The protein operates within carbohydrate acid metabolism; D-glucarate degradation; 2,5-dioxopentanoate from D-glucarate: step 1/2. Catalyzes the dehydration of glucarate to 5-keto-4-deoxy-D-glucarate (5-kdGluc). The polypeptide is Probable glucarate dehydratase (gudD) (Streptomyces coelicolor (strain ATCC BAA-471 / A3(2) / M145)).